Consider the following 159-residue polypeptide: MIDSDGFRPNVGIILANEAGQVLWARRINQEAWQFPQGGINDRETPEEALYRELNEEVGLEAGDVRILACTRGWLRYRLPQRLVRTHSQPLCIGQKQKWFLLRLMSDEARVRMDITSKPEFDGWRWVSYWYPLGQVVTFKREVYRRALKELAPRLLARD.

A Nudix hydrolase domain is found at 6–149; the sequence is GFRPNVGIIL…KREVYRRALK (144 aa). The Nudix box signature appears at 38–59; the sequence is GGINDRETPEEALYRELNEEVG.

The protein belongs to the Nudix hydrolase family. RppH subfamily. The cofactor is a divalent metal cation.

Its function is as follows. Accelerates the degradation of transcripts by removing pyrophosphate from the 5'-end of triphosphorylated RNA, leading to a more labile monophosphorylated state that can stimulate subsequent ribonuclease cleavage. This Pseudomonas aeruginosa (strain LESB58) protein is RNA pyrophosphohydrolase.